The sequence spans 213 residues: Ras-related protein Rab-25 (213 aa).

9 residues coordinate GTP: Ser-21, Gly-24, Lys-25, Thr-26, Asn-27, Ser-38, His-39, Thr-43, and Thr-44. Thr-26 is a binding site for Mg(2+). 2 short sequence motifs (switch) span residues 35-49 (NEFS…GVEF) and 67-84 (DTAG…YYRG). Mg(2+)-binding residues include Thr-44 and Asp-67. GTP is bound by residues Gly-70, Asn-125, Lys-126, Asp-128, Ala-156, and Leu-157. 2 S-geranylgeranyl cysteine lipidation sites follow: Cys-209 and Cys-210. Cysteine methyl ester is present on Cys-210. A propeptide spans 211–213 (ISL) (removed in mature form).

This sequence belongs to the small GTPase superfamily. Rab family. As to quaternary structure, interacts (GTP-bound form) with RAB11FIP1, RAB11FIP2, RAB11FIP3 and RAB11FIP4. Interacts (via the hypervariable C-terminal region) with ITGB1 (via the cytoplasmic region); the interaction is GTP-dependent. Interacts with ITGAV. Associates with the integrin alpha-V/beta-1 heterodimer. Interacts with VPS33B. It depends on Mg(2+) as a cofactor.

It localises to the cell membrane. The protein localises to the cell projection. Its subcellular location is the pseudopodium membrane. The protein resides in the cytoplasmic vesicle. The enzyme catalyses GTP + H2O = GDP + phosphate + H(+). Regulated by guanine nucleotide exchange factors (GEFs) which promote the exchange of bound GDP for free GTP. Regulated by GTPase activating proteins (GAPs) which increase the GTP hydrolysis activity. Inhibited by GDP dissociation inhibitors (GDIs) which prevent Rab-GDP dissociation. The small GTPases Rab are key regulators of intracellular membrane trafficking, from the formation of transport vesicles to their fusion with membranes. Rabs cycle between an inactive GDP-bound form and an active GTP-bound form that is able to recruit to membranes different set of downstream effectors directly responsible for vesicle formation, movement, tethering and fusion. RAB25 regulates epithelial cell differentiation, proliferation and survival, thereby playing key roles in tumorigenesis. Promotes invasive migration of cells in which it functions to localize and maintain integrin alpha-V/beta-1 at the tips of extending pseudopodia. Involved in the regulation of epithelial morphogenesis through the control of CLDN4 expression and localization at tight junctions. May selectively regulate the apical recycling pathway. Together with MYO5B regulates transcytosis. In Canis lupus familiaris (Dog), this protein is Ras-related protein Rab-25 (RAB25).